The primary structure comprises 187 residues: Adenylate kinase (187 aa).

10 to 15 provides a ligand contact to ATP; that stretch reads GSGKGT. Positions 30–59 are NMP; it reads STGDLLRAEVAAGSPLGLKAKEVMARGDLV. Residues threonine 31, arginine 36, 57 to 59, 85 to 88, and glutamine 92 contribute to the AMP site; these read DLV and GYPR. The LID stretch occupies residues 126-136; the sequence is GRAKAEGREDD. Arginine 127 contacts ATP. Residues arginine 133 and arginine 144 each coordinate AMP. An ATP-binding site is contributed by glycine 172.

This sequence belongs to the adenylate kinase family. In terms of assembly, monomer.

The protein localises to the cytoplasm. It carries out the reaction AMP + ATP = 2 ADP. The protein operates within purine metabolism; AMP biosynthesis via salvage pathway; AMP from ADP: step 1/1. Functionally, catalyzes the reversible transfer of the terminal phosphate group between ATP and AMP. Plays an important role in cellular energy homeostasis and in adenine nucleotide metabolism. In Xanthomonas oryzae pv. oryzae (strain MAFF 311018), this protein is Adenylate kinase.